The primary structure comprises 496 residues: uncharacterized protein (496 aa).

The signal sequence occupies residues Met-1–Ala-19. The chain crosses the membrane as a helical span at residues Ala-45–Ala-67. The interval Leu-113–Ala-137 is disordered.

The protein localises to the membrane. This is an uncharacterized protein from Nostoc sp. (strain PCC 7120 / SAG 25.82 / UTEX 2576).